The following is a 329-amino-acid chain: UDP-N-acetylenolpyruvoylglucosamine reductase (329 aa).

Positions 28–192 constitute an FAD-binding PCMH-type domain; that stretch reads RVGGPADLLC…ARVEVRLRPG (165 aa). Residue Arg172 is part of the active site. A disordered region spans residues 204–225; sequence DRERRRATQPLDRPTFGSTFTN. Ser221 acts as the Proton donor in catalysis. Residue Glu291 is part of the active site. The disordered stretch occupies residues 303–329; it reads LAGLDGHAADGGGPGAASGGARPREAT. Residues 311–320 are compositionally biased toward gly residues; sequence ADGGGPGAAS.

The protein belongs to the MurB family. FAD is required as a cofactor.

Its subcellular location is the cytoplasm. It catalyses the reaction UDP-N-acetyl-alpha-D-muramate + NADP(+) = UDP-N-acetyl-3-O-(1-carboxyvinyl)-alpha-D-glucosamine + NADPH + H(+). It participates in cell wall biogenesis; peptidoglycan biosynthesis. In terms of biological role, cell wall formation. This Anaeromyxobacter dehalogenans (strain 2CP-C) protein is UDP-N-acetylenolpyruvoylglucosamine reductase.